A 346-amino-acid chain; its full sequence is Glycerol-3-phosphate dehydrogenase [NAD(P)+] (346 aa).

Residues Ser15, Trp16, Arg36, and Lys110 each contribute to the NADPH site. Sn-glycerol 3-phosphate is bound by residues Lys110, Gly139, and Ser141. Ala143 contacts NADPH. Residues Lys194, Asp247, Ser257, Arg258, and Asn259 each coordinate sn-glycerol 3-phosphate. The active-site Proton acceptor is the Lys194. Arg258 lines the NADPH pocket. Val282 and Glu284 together coordinate NADPH.

The protein belongs to the NAD-dependent glycerol-3-phosphate dehydrogenase family.

The protein localises to the cytoplasm. It carries out the reaction sn-glycerol 3-phosphate + NAD(+) = dihydroxyacetone phosphate + NADH + H(+). The enzyme catalyses sn-glycerol 3-phosphate + NADP(+) = dihydroxyacetone phosphate + NADPH + H(+). It participates in membrane lipid metabolism; glycerophospholipid metabolism. Functionally, catalyzes the reduction of the glycolytic intermediate dihydroxyacetone phosphate (DHAP) to sn-glycerol 3-phosphate (G3P), the key precursor for phospholipid synthesis. The protein is Glycerol-3-phosphate dehydrogenase [NAD(P)+] of Xylella fastidiosa (strain M23).